Reading from the N-terminus, the 105-residue chain is Heat shock protein HspQ (105 aa).

The segment at 77–105 (MRDEHPEQPSMDELARTIRKQLQAPRLRN) is disordered.

This sequence belongs to the HspQ family.

It is found in the cytoplasm. Functionally, involved in the degradation of certain denaturated proteins, including DnaA, during heat shock stress. The sequence is that of Heat shock protein HspQ from Salmonella arizonae (strain ATCC BAA-731 / CDC346-86 / RSK2980).